Reading from the N-terminus, the 638-residue chain is Growth hormone receptor (638 aa).

The N-terminal stretch at 1-18 is a signal peptide; sequence MDLWQLLLTLALAGSSDA. The Extracellular segment spans residues 19 to 264; it reads FSGSEPTAAI…NQFTCEEDFY (246 aa). N-linked (GlcNAc...) asparagine glycosylation occurs at N46. Intrachain disulfides connect C56/C66 and C101/C112. N115 carries an N-linked (GlcNAc...) asparagine glycan. An intrachain disulfide couples C126 to C140. In terms of domain architecture, Fibronectin type-III spans 151 to 254; the sequence is PPIALNWTLL…EVLYVTLPQM (104 aa). N-linked (GlcNAc...) asparagine glycans are attached at residues N156, N161, and N200. A WSXWS motif motif is present at residues 240-244; the sequence is YGEFS. The helical transmembrane segment at 265 to 288 threads the bilayer; it reads FPWLLIIIFGIFGLTVMLFVFLFS. Over 289 to 638 the chain is Cytoplasmic; that stretch reads KQQRIKMLIL…STDQLNKIMP (350 aa). The segment at 294–379 is required for JAK2 binding; it reads KMLILPPVPV…HQKSHSNLGV (86 aa). A Box 1 motif motif is present at residues 297–305; the sequence is ILPPVPVPK. The UbE motif signature appears at 340–349; the sequence is DSWVEFIELD. At S341 the chain carries Phosphoserine. Residues 353–388 are disordered; that stretch reads PDEKNEGSDTDRLLSSDHQKSHSNLGVKDGDSGRTS. A compositionally biased stretch (basic and acidic residues) spans 356 to 372; it reads KNEGSDTDRLLSSDHQK. A phosphotyrosine mark is found at Y487 and Y595.

Belongs to the type I cytokine receptor family. Type 1 subfamily. As to quaternary structure, on growth hormone (GH) binding, forms homodimers and binds JAK2 via a box 1-containing domain. The soluble form (GHBP) is produced by phorbol ester-promoted proteolytic cleavage at the cell surface (shedding) by ADAM17/TACE. Shedding is inhibited by growth hormone (GH) binding to the receptor probably due to a conformational change in GHR rendering the receptor inaccessible to ADAM17. Post-translationally, on GH binding, phosphorylated on tyrosine residues in the cytoplasmic domain by JAK2. In terms of processing, ubiquitinated by the ECS(SOCS2) complex following ligand-binding and phosphorylation by JAK2, leading to its degradation by the proteasome. Regulation by the ECS(SOCS2) complex acts as a negative feedback loop of growth hormone receptor signaling. Ubiquitination is not sufficient for GHR internalization.

It is found in the cell membrane. The protein resides in the secreted. In terms of biological role, receptor for pituitary gland growth hormone (GH1) involved in regulating postnatal body growth. On ligand binding, couples to the JAK2/STAT5 pathway. The soluble form (GHBP) acts as a reservoir of growth hormone in plasma and may be a modulator/inhibitor of GH signaling. The protein is Growth hormone receptor (GHR) of Papio anubis (Olive baboon).